The sequence spans 866 residues: Putative linoleate 9S-lipoxygenase 3 (866 aa).

A PLAT domain is found at 33–161 (NDFGATVIDG…KYRYDRVFFA (129 aa)). Positions 164 to 866 (AYLPSQMPAA…AKGIPNSISI (703 aa)) constitute a Lipoxygenase domain. Residues 206–250 (YNDLGSPDSGNPRPILGGSPDTPYPRRGRTGRKPTTTDPDSESRL) form a disordered region. The Fe cation site is built by His-521, His-526, His-712, Asn-716, and Ile-866.

This sequence belongs to the lipoxygenase family. Fe cation serves as cofactor.

The catalysed reaction is (9Z,12Z)-octadecadienoate + O2 = (9S)-hydroperoxy-(10E,12Z)-octadecadienoate. It functions in the pathway lipid metabolism; oxylipin biosynthesis. In terms of biological role, plant lipoxygenase may be involved in a number of diverse aspects of plant physiology including growth and development, pest resistance, and senescence or responses to wounding. Catalyzes the hydroperoxidation of lipids containing a cis,cis-1,4-pentadiene structure. The chain is Putative linoleate 9S-lipoxygenase 3 from Oryza sativa subsp. japonica (Rice).